A 155-amino-acid chain; its full sequence is HTH-type transcriptional repressor MdtR (155 aa).

The 137-residue stretch at 4 to 140 (ADQLMSDIQL…AAHITAKLAQ (137 aa)) folds into the HTH marR-type domain. The segment at residues 54 to 77 (VSEIAERMEVKPSAVTLMADRLEQ) is a DNA-binding region (H-T-H motif).

Homodimer.

It localises to the cytoplasm. Its activity is regulated as follows. The binding of MdtR to the mdtRP promoter region is severely inhibited by adding excess concentrations of fusidic acid or novobiocin but not by actinomycin or streptomycin. Its function is as follows. Repressor of the multidrug resistance operon mdtRP. Acts by binding directly to the mdtRP promoter region, leading to the repression of its expression. This chain is HTH-type transcriptional repressor MdtR, found in Bacillus subtilis (strain 168).